The primary structure comprises 24 residues: Brevinin-1HSa (24 aa).

Residues C18 and C24 are joined by a disulfide bond.

As to expression, expressed by the skin glands.

It is found in the secreted. Functionally, has antibacterial activity against the Gram-positive bacterium S.aureus ATCC 25923 (MIC=3 uM) and the Gram-negative bacterium E.coli ATCC 25726 (MIC=24 uM). This is Brevinin-1HSa from Odorrana hosii (Hose's rock frog).